The primary structure comprises 858 residues: Potassium transporter 7 (858 aa).

Composition is skewed to acidic residues over residues 1-16 and 38-53; these read MAEE…EEID and QDDD…DNDG. Residues 1-68 are disordered; that stretch reads MAEESSMEGS…LESDEDEIPE (68 aa). Residues 1–104 lie on the Cytoplasmic side of the membrane; sequence MAEESSMEGS…DYEDLTVGRK (104 aa). A helical membrane pass occupies residues 105–125; it reads VLLAFQTLGVVFGDVGTSPLY. Residues 126–147 are Extracellular-facing; sequence TFSVMFSKSPVQEKEDVIGALS. Residues 148-168 form a helical membrane-spanning segment; that stretch reads LVLYTLLLVPLIKYVLVVLWA. Residues 169-232 are Cytoplasmic-facing; the sequence is NDDGEGGTFA…KLENSLILKK (64 aa). Residues 233–253 traverse the membrane as a helical segment; the sequence is ILLVLVLAGTSMVIADGVVTP. The Extracellular segment spans residues 254-269; it reads AMSVMSAVGGLKVGVD. Residues 270–290 traverse the membrane as a helical segment; that stretch reads VVEQDQVVMISVAFLVILFSL. At 291-297 the chain is on the cytoplasmic side; that stretch reads QKYGTSK. Residues 298–318 form a helical membrane-spanning segment; that stretch reads MGLVVGPALLIWFCSLAGIGI. Over 319–345 the chain is Extracellular; sequence YNLIKYDSSVYRAFNPVHIYYFFKRNS. The helical transmembrane segment at 346–366 threads the bilayer; it reads INAWYALGGCILCATGSEALF. Residues 367-380 lie on the Cytoplasmic side of the membrane; the sequence is ADLCYFSVRSVQLT. Residues 381–401 form a helical membrane-spanning segment; that stretch reads FVCLVLPCLMLGYMGQAAYLM. Topologically, residues 402–413 are extracellular; that stretch reads ENHADASQAFFS. A helical transmembrane segment spans residues 414–434; the sequence is SVPGSAFWPVLFIANIAALIA. Over 435-470 the chain is Cytoplasmic; sequence SRTMTTATFSCIKQSTALGCFPRLKIIHTSRKFMGQ. The chain crosses the membrane as a helical span at residues 471–491; sequence IYIPVLNWFLLAVCLVVVCSI. Residues 492-496 lie on the Extracellular side of the membrane; it reads SSIDE. The chain crosses the membrane as a helical span at residues 497-517; the sequence is IGNAYGMAELGVMMTTTILVT. Leu-518 is a topological domain (cytoplasmic). A helical membrane pass occupies residues 519 to 539; that stretch reads IMLLIWQINIVIVIAFLVVFL. Residues 540–552 lie on the Extracellular side of the membrane; the sequence is GVELVFFSSVIAS. The chain crosses the membrane as a helical span at residues 553–573; it reads VGDGSWIILVFAVIMFGIMYI. Residues 574-858 are Cytoplasmic-facing; sequence WNYGSKLRYE…LMQVGMTYMV (285 aa). Positions 707–731 are disordered; it reads QERSLESDGNDDSDSEEDFPGSRVV. Residues 714–725 are compositionally biased toward acidic residues; sequence DGNDDSDSEEDF. A phosphoserine mark is found at Ser-719 and Ser-721.

The protein belongs to the HAK/KUP transporter (TC 2.A.72.3) family.

It is found in the cell membrane. In terms of biological role, probable potassium transporter. In Arabidopsis thaliana (Mouse-ear cress), this protein is Potassium transporter 7 (POT7).